The primary structure comprises 582 residues: MGPKSKEYENPSSYKNDEDNDDDGDFVLENVMSEEDIEIETPSRNRKRVSTTRRTPSKPIRSQPLTPSSSKGAGNEPKSQNSSTTRGSAKKQSSKGLEEKLINSYGTHVESLNKGRRLIEIWKYYETAPGQSSFEGQTSSDSKLQTLLNLDGQQLLSYSENPFYLFEVKNLSISFHFESPQQVEPCQPVNPFKENPQKSGFVVNTGIPLSSVSWLPTNKETQFLAVGGMLKFSETTESVFMRTSGRNQIQLWKLENKTNFKSEFILYHDWGSVLQLEWCPTISVEDSILGFLAVVCSDGKLRVLRVPRSPVKFHVFVEQADFTFGFNDSLISCCTWVSPEHGDIHQILVGCSNGYLALWDILSSQECPLFYIPYHDSYIHNVVQCLDDFPWLFLTTAFDCYTRIFDIRDPIIDNRPLSHKRDICYTITWNNMLQSIISCSESQSVVIESLRGTSTQLLDERNGSIISLSNSKFHPFVACAASDGIVTIVNPFRLLGFSHKQKANVHRIFQLEYSEKQDSYRMLDGFRPRLPKAKKLDMYIYPWQIQVNKVEWNGNKGYAGWLASGMACGILRVEDLSAVERR.

The segment at 1-97 (MGPKSKEYEN…SAKKQSSKGL (97 aa)) is disordered. Residues 18-39 (EDNDDDGDFVLENVMSEEDIEI) are compositionally biased toward acidic residues. A compositionally biased stretch (polar residues) spans 63 to 87 (QPLTPSSSKGAGNEPKSQNSSTTRG). WD repeat units follow at residues 221 to 262 (TQFL…NFKS), 268 to 314 (HDWG…VKFH), and 326 to 369 (FNDS…ECPL).

Component of the TFIIIC complex including sfc1, sfc3, sfc4, sfc6 and sfc7. The subunits are organized in two globular domains, tauA and tauB, connected by a proteolysis-sensitive and flexible linker. Interacts with sfc1, sfc3 and sfc4.

Its subcellular location is the nucleus. TFIIIC mediates tRNA and 5S RNA gene activation by binding to intragenic promoter elements. Upstream of the transcription start site, TFIIIC assembles the initiation complex TFIIIB-TFIIIC-tDNA, which is sufficient for RNA polymerase III recruitment and function. Part of the tauB domain of TFIIIC that binds boxB DNA promoter sites of tRNA and similar genes. Cooperates with sfc3 in DNA binding. Localizes to chromatin insulator sequence without recruiting RNA polymerase III and plays a role in nuclear organization. This is Transcription factor tau subunit sfc6 from Schizosaccharomyces pombe (strain 972 / ATCC 24843) (Fission yeast).